The sequence spans 361 residues: MAGNSIGQFFRVTTFGESHGLALGCIVDGVPPGIAITEADLQVDLDRRRPGTSRYTTQRREPDQVRILSGVFEGVTTGTSIGLLIENTDQRSQDYSAIKDVFRPGHADYTYEQKYGIRDYRGGGRSSARETAMRVAAGAIAKKYLLDKYGIRVRACLTQMGNIHCQLKDWELVEQNPFFSPDETKLEQLDALMRELKKAGDSIGAKVTVVAENVPAGLGEPVFDRLDADIAHALMSINAVKGVEIGDGFGVINLRGSENRDEITARGFTSNHAGGILGGISSSQPIVAHIALKPTSSIMVPGKTINRQGEEVEMVTRGRHDPCVGIRAVPIAEAMMAIVLMDHLLRQRAQCADVESSLPRW.

Arg-48 and Arg-54 together coordinate NADP(+). FMN is bound by residues 125-127, 238-239, Gly-278, 293-297, and Arg-319; these read RSS, NA, and KPTSS.

Belongs to the chorismate synthase family. As to quaternary structure, homotetramer. FMNH2 is required as a cofactor.

The enzyme catalyses 5-O-(1-carboxyvinyl)-3-phosphoshikimate = chorismate + phosphate. It functions in the pathway metabolic intermediate biosynthesis; chorismate biosynthesis; chorismate from D-erythrose 4-phosphate and phosphoenolpyruvate: step 7/7. Functionally, catalyzes the anti-1,4-elimination of the C-3 phosphate and the C-6 proR hydrogen from 5-enolpyruvylshikimate-3-phosphate (EPSP) to yield chorismate, which is the branch point compound that serves as the starting substrate for the three terminal pathways of aromatic amino acid biosynthesis. This reaction introduces a second double bond into the aromatic ring system. The chain is Chorismate synthase from Photorhabdus laumondii subsp. laumondii (strain DSM 15139 / CIP 105565 / TT01) (Photorhabdus luminescens subsp. laumondii).